Reading from the N-terminus, the 316-residue chain is 4-hydroxy-3-methylbut-2-enyl diphosphate reductase (316 aa).

Residue C17 participates in [4Fe-4S] cluster binding. Residues H46 and H79 each coordinate (2E)-4-hydroxy-3-methylbut-2-enyl diphosphate. Dimethylallyl diphosphate-binding residues include H46 and H79. Isopentenyl diphosphate is bound by residues H46 and H79. C101 serves as a coordination point for [4Fe-4S] cluster. A (2E)-4-hydroxy-3-methylbut-2-enyl diphosphate-binding site is contributed by H129. A dimethylallyl diphosphate-binding site is contributed by H129. Residue H129 coordinates isopentenyl diphosphate. E131 serves as the catalytic Proton donor. T170 provides a ligand contact to (2E)-4-hydroxy-3-methylbut-2-enyl diphosphate. C200 serves as a coordination point for [4Fe-4S] cluster. Residues S228, S229, N230, and S273 each contribute to the (2E)-4-hydroxy-3-methylbut-2-enyl diphosphate site. S228, S229, N230, and S273 together coordinate dimethylallyl diphosphate. Residues S228, S229, N230, and S273 each coordinate isopentenyl diphosphate.

It belongs to the IspH family. [4Fe-4S] cluster is required as a cofactor.

It catalyses the reaction isopentenyl diphosphate + 2 oxidized [2Fe-2S]-[ferredoxin] + H2O = (2E)-4-hydroxy-3-methylbut-2-enyl diphosphate + 2 reduced [2Fe-2S]-[ferredoxin] + 2 H(+). It carries out the reaction dimethylallyl diphosphate + 2 oxidized [2Fe-2S]-[ferredoxin] + H2O = (2E)-4-hydroxy-3-methylbut-2-enyl diphosphate + 2 reduced [2Fe-2S]-[ferredoxin] + 2 H(+). It functions in the pathway isoprenoid biosynthesis; dimethylallyl diphosphate biosynthesis; dimethylallyl diphosphate from (2E)-4-hydroxy-3-methylbutenyl diphosphate: step 1/1. The protein operates within isoprenoid biosynthesis; isopentenyl diphosphate biosynthesis via DXP pathway; isopentenyl diphosphate from 1-deoxy-D-xylulose 5-phosphate: step 6/6. Catalyzes the conversion of 1-hydroxy-2-methyl-2-(E)-butenyl 4-diphosphate (HMBPP) into a mixture of isopentenyl diphosphate (IPP) and dimethylallyl diphosphate (DMAPP). Acts in the terminal step of the DOXP/MEP pathway for isoprenoid precursor biosynthesis. This is 4-hydroxy-3-methylbut-2-enyl diphosphate reductase from Roseobacter denitrificans (strain ATCC 33942 / OCh 114) (Erythrobacter sp. (strain OCh 114)).